A 119-amino-acid chain; its full sequence is Beta-2-microglobulin (119 aa).

The first 20 residues, 1 to 20 (MARFVVVALLVLLSVSDLEA), serve as a signal peptide directing secretion. The Ig-like C1-type domain occupies 25–114 (PKIQVYSRYP…VTFLTPKTVK (90 aa)). C45 and C100 are oxidised to a cystine.

This sequence belongs to the beta-2-microglobulin family. Heterodimer of an alpha chain and a beta chain. Beta-2-microglobulin is the beta-chain of major histocompatibility complex class I molecules.

The protein localises to the secreted. Its function is as follows. Component of the class I major histocompatibility complex (MHC). Involved in the presentation of peptide antigens to the immune system. The polypeptide is Beta-2-microglobulin (B2M) (Leontocebus fuscicollis (Brown-mantled tamarin)).